Reading from the N-terminus, the 1357-residue chain is DNA-directed RNA polymerase subunit beta (1357 aa).

This sequence belongs to the RNA polymerase beta chain family. In terms of assembly, the RNAP catalytic core consists of 2 alpha, 1 beta, 1 beta' and 1 omega subunit. When a sigma factor is associated with the core the holoenzyme is formed, which can initiate transcription.

It catalyses the reaction RNA(n) + a ribonucleoside 5'-triphosphate = RNA(n+1) + diphosphate. Functionally, DNA-dependent RNA polymerase catalyzes the transcription of DNA into RNA using the four ribonucleoside triphosphates as substrates. This chain is DNA-directed RNA polymerase subunit beta, found in Ectopseudomonas mendocina (strain ymp) (Pseudomonas mendocina).